Consider the following 312-residue polypeptide: Aspartate carbamoyltransferase catalytic subunit (312 aa).

Residues arginine 55 and threonine 56 each coordinate carbamoyl phosphate. Lysine 83 is an L-aspartate binding site. Residues arginine 105, histidine 138, and glutamine 141 each contribute to the carbamoyl phosphate site. L-aspartate contacts are provided by arginine 171 and arginine 225. The carbamoyl phosphate site is built by glycine 266 and proline 267.

This sequence belongs to the aspartate/ornithine carbamoyltransferase superfamily. ATCase family. In terms of assembly, heterododecamer (2C3:3R2) of six catalytic PyrB chains organized as two trimers (C3), and six regulatory PyrI chains organized as three dimers (R2).

The catalysed reaction is carbamoyl phosphate + L-aspartate = N-carbamoyl-L-aspartate + phosphate + H(+). The protein operates within pyrimidine metabolism; UMP biosynthesis via de novo pathway; (S)-dihydroorotate from bicarbonate: step 2/3. Its function is as follows. Catalyzes the condensation of carbamoyl phosphate and aspartate to form carbamoyl aspartate and inorganic phosphate, the committed step in the de novo pyrimidine nucleotide biosynthesis pathway. The chain is Aspartate carbamoyltransferase catalytic subunit from Corynebacterium glutamicum (strain R).